Reading from the N-terminus, the 142-residue chain is Matrix protein (142 aa).

Residues 64–66 and Ala117 contribute to the GMP site; that span reads DVE.

Homooligomer. Homotetramer. Interacts with phosphoprotein P. Binds to ssRNA. In terms of processing, not glycosylated.

The protein resides in the virion. The protein localises to the host cytoplasm. It localises to the host cell membrane. Plays a crucial role in virion assembly and budding. This is Matrix protein (M) from Bos taurus (Bovine).